Here is a 424-residue protein sequence, read N- to C-terminus: Glycerol-3-phosphate dehydrogenase [NAD(+)] (424 aa).

NAD(+) contacts are provided by residues 79–84, Phe-111, and Phe-167; that span reads GSGNWG. Residue Lys-190 coordinates substrate. Ala-223 provides a ligand contact to NAD(+). The Proton acceptor role is filled by Lys-283. Residues Arg-348 and Gln-377 each contribute to the NAD(+) site. Substrate is bound at residue 348–349; that stretch reads RN.

Belongs to the NAD-dependent glycerol-3-phosphate dehydrogenase family.

It carries out the reaction sn-glycerol 3-phosphate + NAD(+) = dihydroxyacetone phosphate + NADH + H(+). In Eremothecium gossypii (strain ATCC 10895 / CBS 109.51 / FGSC 9923 / NRRL Y-1056) (Yeast), this protein is Glycerol-3-phosphate dehydrogenase [NAD(+)] (GPD).